A 332-amino-acid polypeptide reads, in one-letter code: Probable xyloglucan endotransglucosylase/hydrolase protein 28 (332 aa).

The first 22 residues, 1 to 22, serve as a signal peptide directing secretion; sequence MGFITRFLVFMSLFTSLVSGFA. The GH16 domain maps to 23-223; sequence LQKLPLIQFD…YKYAPYVSQF (201 aa). The active-site Nucleophile is the E108. E112 acts as the Proton donor in catalysis. Residues E112 and 125–127 contribute to the xyloglucan site; that span reads QTN. A glycan (N-linked (GlcNAc...) asparagine) is linked at N131. Xyloglucan is bound by residues 135–139, 202–203, G207, and R282; these read HLGRE and KW. C277 and C290 are oxidised to a cystine. Residues 313-326 show a composition bias toward basic residues; it reads HGHRRGKHRSRSRL. The tract at residues 313 to 332 is disordered; sequence HGHRRGKHRSRSRLARTESI.

The protein belongs to the glycosyl hydrolase 16 family. XTH group 3 subfamily. Contains at least one intrachain disulfide bond essential for its enzymatic activity. As to expression, expressed in 7 day old seedlings, roots, rosette leaves, internodes between nodes bearing axillary shoots, nodes bearing flowers, flower buds and siliques.

It is found in the secreted. The protein localises to the cell wall. The protein resides in the extracellular space. Its subcellular location is the apoplast. It carries out the reaction breaks a beta-(1-&gt;4) bond in the backbone of a xyloglucan and transfers the xyloglucanyl segment on to O-4 of the non-reducing terminal glucose residue of an acceptor, which can be a xyloglucan or an oligosaccharide of xyloglucan.. In terms of biological role, catalyzes xyloglucan endohydrolysis (XEH) and/or endotransglycosylation (XET). Cleaves and religates xyloglucan polymers, an essential constituent of the primary cell wall, and thereby participates in cell wall construction of growing tissues. The sequence is that of Probable xyloglucan endotransglucosylase/hydrolase protein 28 (XTH28) from Arabidopsis thaliana (Mouse-ear cress).